Reading from the N-terminus, the 59-residue chain is UPF0434 protein VIBHAR_01537 (59 aa).

The protein belongs to the UPF0434 family.

The chain is UPF0434 protein VIBHAR_01537 from Vibrio campbellii (strain ATCC BAA-1116).